Here is a 332-residue protein sequence, read N- to C-terminus: 5,10-methylenetetrahydromethanopterin reductase (332 aa).

It belongs to the mer family.

Its subcellular location is the cytoplasm. It catalyses the reaction 5-methyl-5,6,7,8-tetrahydromethanopterin + oxidized coenzyme F420-(gamma-L-Glu)(n) + H(+) = 5,10-methylenetetrahydromethanopterin + reduced coenzyme F420-(gamma-L-Glu)(n). The protein operates within metabolic intermediate metabolism; lactate oxidation. Catalyzes the oxidation of methyl-H(4)MPT to methylene-H(4)MPT. This Archaeoglobus fulgidus (strain ATCC 49558 / DSM 4304 / JCM 9628 / NBRC 100126 / VC-16) protein is 5,10-methylenetetrahydromethanopterin reductase.